The chain runs to 269 residues: 4-hydroxy-tetrahydrodipicolinate reductase (269 aa).

NAD(+) is bound by residues 8-13 (GAAGRM) and Glu34. Arg35 provides a ligand contact to NADP(+). NAD(+)-binding positions include 98 to 100 (GTT) and 122 to 125 (APNY). The active-site Proton donor/acceptor is the His155. His156 serves as a coordination point for (S)-2,3,4,5-tetrahydrodipicolinate. The active-site Proton donor is the Lys159. 165 to 166 (GT) serves as a coordination point for (S)-2,3,4,5-tetrahydrodipicolinate.

This sequence belongs to the DapB family.

It is found in the cytoplasm. The enzyme catalyses (S)-2,3,4,5-tetrahydrodipicolinate + NAD(+) + H2O = (2S,4S)-4-hydroxy-2,3,4,5-tetrahydrodipicolinate + NADH + H(+). The catalysed reaction is (S)-2,3,4,5-tetrahydrodipicolinate + NADP(+) + H2O = (2S,4S)-4-hydroxy-2,3,4,5-tetrahydrodipicolinate + NADPH + H(+). Its pathway is amino-acid biosynthesis; L-lysine biosynthesis via DAP pathway; (S)-tetrahydrodipicolinate from L-aspartate: step 4/4. Catalyzes the conversion of 4-hydroxy-tetrahydrodipicolinate (HTPA) to tetrahydrodipicolinate. The chain is 4-hydroxy-tetrahydrodipicolinate reductase from Aliivibrio fischeri (strain ATCC 700601 / ES114) (Vibrio fischeri).